A 244-amino-acid polypeptide reads, in one-letter code: Claudin-12 (244 aa).

Residues 1–10 (MGCRDVHAAT) are Cytoplasmic-facing. Residues 11–31 (VLSFLCGIASVAGLFAGTLLP) form a helical membrane-spanning segment. The Extracellular portion of the chain corresponds to 32–87 (NWRKLRLITFNRNEKNLTVYTGLWVKCARYDGSSDCLMYDTTWYSSVDQLDLRVLQ). A helical membrane pass occupies residues 88 to 108 (FALPLSMLIAMGALLLCLIGM). The Cytoplasmic segment spans residues 109 to 135 (CNTAFRSSVPNIKLAKCLVNSAGCHLV). The helical transmembrane segment at 136–156 (AGLLFFLAGTVSLSPSIWVIF) threads the bilayer. The Extracellular segment spans residues 157–174 (YNIHLNKKFEPVFSFDYA). The chain crosses the membrane as a helical span at residues 175 to 195 (VYVTIASAGGLFMTSLILFIW). Residues 196-244 (YCTCKSLPSPFWQPLYSHPPSMHTYSQPYSARSRLSAIEIDIPVVSHTT) lie on the Cytoplasmic side of the membrane. Residues Ser-228 and Ser-231 each carry the phosphoserine modification.

This sequence belongs to the claudin family. In terms of assembly, interacts with OCLN.

It is found in the cell junction. Its subcellular location is the tight junction. It localises to the cell membrane. Functionally, plays a major role in tight junction-specific obliteration of the intercellular space, through calcium-independent cell-adhesion activity. In Pongo abelii (Sumatran orangutan), this protein is Claudin-12 (CLDN12).